The primary structure comprises 213 residues: Uridine kinase (213 aa).

Position 13–20 (13–20) interacts with ATP; it reads GASASGKS.

It belongs to the uridine kinase family.

It is found in the cytoplasm. It catalyses the reaction uridine + ATP = UMP + ADP + H(+). The catalysed reaction is cytidine + ATP = CMP + ADP + H(+). It functions in the pathway pyrimidine metabolism; CTP biosynthesis via salvage pathway; CTP from cytidine: step 1/3. Its pathway is pyrimidine metabolism; UMP biosynthesis via salvage pathway; UMP from uridine: step 1/1. This chain is Uridine kinase, found in Haemophilus influenzae (strain PittEE).